The chain runs to 196 residues: MAAPGPGEYFSVGSHVSCLTCLGQRLQGEVVAFDYPSKMLTLKCAPSSGKPNLSDVMLVNLAYVSEVDIITDRAETPPPLASLNFNKLVNRARAEKEDKLSLAYAVSAGVSVEGQQLFQTIHKTIKECKWQEKNIIVMDDVVISPPYQVDNCKGKEGSALSHVRKIVEKHFRDVESQISVQHSQQAQHTQDSALSS.

Positions 3-70 (APGPGEYFSV…LAYVSEVDII (68 aa)) constitute a Sm domain. An AD domain is found at 81 to 175 (ASLNFNKLVN…IVEKHFRDVE (95 aa)).

It belongs to the LSM12 family.

The protein is Protein LSM12 homolog B (lsm12b) of Danio rerio (Zebrafish).